Consider the following 50-residue polypeptide: Small ribosomal subunit protein uS14 (50 aa).

Zn(2+) is bound by residues Cys-15, Cys-18, Cys-33, and Cys-36.

The protein belongs to the universal ribosomal protein uS14 family. Zinc-binding uS14 subfamily. As to quaternary structure, part of the 30S ribosomal subunit. It depends on Zn(2+) as a cofactor.

Functionally, binds 16S rRNA, required for the assembly of 30S particles. This Methanothermobacter thermautotrophicus (strain ATCC 29096 / DSM 1053 / JCM 10044 / NBRC 100330 / Delta H) (Methanobacterium thermoautotrophicum) protein is Small ribosomal subunit protein uS14.